Consider the following 491-residue polypeptide: Glutamate--tRNA ligase (491 aa).

A 'HIGH' region motif is present at residues 9-19 (PSPTGTPHVGM). A 'KMSKS' region motif is present at residues 253–257 (KLSKR). ATP is bound at residue K256.

Belongs to the class-I aminoacyl-tRNA synthetase family. Glutamate--tRNA ligase type 1 subfamily. As to quaternary structure, monomer.

It localises to the cytoplasm. It catalyses the reaction tRNA(Glu) + L-glutamate + ATP = L-glutamyl-tRNA(Glu) + AMP + diphosphate. Its function is as follows. Catalyzes the attachment of glutamate to tRNA(Glu) in a two-step reaction: glutamate is first activated by ATP to form Glu-AMP and then transferred to the acceptor end of tRNA(Glu). The polypeptide is Glutamate--tRNA ligase (Leifsonia xyli subsp. xyli (strain CTCB07)).